We begin with the raw amino-acid sequence, 299 residues long: Acetylglutamate kinase (299 aa).

Substrate is bound by residues 70-71, R92, and N186; that span reads GG.

It belongs to the acetylglutamate kinase family. ArgB subfamily.

The protein localises to the cytoplasm. The enzyme catalyses N-acetyl-L-glutamate + ATP = N-acetyl-L-glutamyl 5-phosphate + ADP. Its pathway is amino-acid biosynthesis; L-arginine biosynthesis; N(2)-acetyl-L-ornithine from L-glutamate: step 2/4. Catalyzes the ATP-dependent phosphorylation of N-acetyl-L-glutamate. This is Acetylglutamate kinase from Thermoanaerobacter sp. (strain X514).